A 654-amino-acid chain; its full sequence is C6 finger domain transcription factor nscR (654 aa).

The zn(2)-C6 fungal-type DNA-binding region spans 17 to 43 (CELCRERKVKCDKLDPCTNCSSAGVIC).

The protein resides in the nucleus. Transcription factor that specifically regulates the neosartoricin B biosynthesis gene cluster. This is C6 finger domain transcription factor nscR from Trichophyton verrucosum (strain HKI 0517).